A 152-amino-acid chain; its full sequence is Ribonuclease H (152 aa).

Residues 6–147 (KKNNVIAYTD…ADELANKAIA (142 aa)) enclose the RNase H type-1 domain. Residues Asp15, Glu53, Asp75, and Asp139 each contribute to the Mg(2+) site.

It belongs to the RNase H family. Monomer. Requires Mg(2+) as cofactor.

Its subcellular location is the cytoplasm. It catalyses the reaction Endonucleolytic cleavage to 5'-phosphomonoester.. In terms of biological role, endonuclease that specifically degrades the RNA of RNA-DNA hybrids. The chain is Ribonuclease H from Francisella philomiragia subsp. philomiragia (strain ATCC 25017 / CCUG 19701 / FSC 153 / O#319-036).